The sequence spans 210 residues: Molybdenum cofactor guanylyltransferase (210 aa).

GTP is bound by residues 14-16, lysine 27, asparagine 55, aspartate 73, and aspartate 108; that span reads LAG. Aspartate 108 contacts Mg(2+).

It belongs to the MobA family. Monomer. It depends on Mg(2+) as a cofactor.

It is found in the cytoplasm. It carries out the reaction Mo-molybdopterin + GTP + H(+) = Mo-molybdopterin guanine dinucleotide + diphosphate. Transfers a GMP moiety from GTP to Mo-molybdopterin (Mo-MPT) cofactor (Moco or molybdenum cofactor) to form Mo-molybdopterin guanine dinucleotide (Mo-MGD) cofactor. The polypeptide is Molybdenum cofactor guanylyltransferase (Rhodopseudomonas palustris (strain BisB5)).